An 80-amino-acid chain; its full sequence is Putative defensin-like protein 28 (80 aa).

Positions 1-22 are cleaved as a signal peptide; the sequence is MLRANVVVSLVIFAALMQCMNG.

The protein belongs to the DEFL family.

Its subcellular location is the secreted. This Arabidopsis thaliana (Mouse-ear cress) protein is Putative defensin-like protein 28.